Here is a 572-residue protein sequence, read N- to C-terminus: Na(+)/citrate cotransporter (572 aa).

The next 8 membrane-spanning stretches (helical) occupy residues 13–33 (SFVI…LVPD), 53–73 (VIPV…LKVL), 80–100 (VQYM…ATAV), 124–144 (LMLG…NTAT), 218–238 (AASI…VLLG), 255–275 (SWFA…WLWL), 315–335 (PLSY…ILWF), and 357–377 (HVTD…VPSQ). N-linked (GlcNAc...) asparagine glycosylation is present at N382. 4 consecutive transmembrane segments (helical) span residues 410–430 (VPWG…GCET), 443–463 (PLSS…VAMT), 491–511 (PLYV…LPVA), and 532–552 (TGLV…NTWG). N566 is a glycosylation site (N-linked (GlcNAc...) asparagine).

The protein belongs to the SLC13A/DASS transporter (TC 2.A.47) family. NADC subfamily. In terms of assembly, homodimer. Expressed in liver, testis and brain.

It localises to the cell membrane. It catalyses the reaction citrate(out) + 4 Na(+)(out) = citrate(in) + 4 Na(+)(in). With respect to regulation, inhibited by Li(+). In terms of biological role, high-affinity sodium/citrate cotransporter that mediates citrate entry into cells, which is a critical participant of biochemical pathways. May function in various metabolic processes in which citrate has a critical role such as energy production (Krebs cycle), fatty acid synthesis, cholesterol synthesis, glycolysis, and gluconeogenesis. Transports citrate into the cell in a Na(+)-dependent manner, recognizing the trivalent form of citrate (physiological pH) rather than the divalent form. Can recognize succinate as a substrate, but its affinity for succinate is several fold lower than for citrate. The stoichiometry is probably 4 Na(+) for each carboxylate, irrespective of whether the translocated substrate is divalent or trivalent, rendering the process electrogenic. Involved in the regulation of citrate levels in the brain. The sequence is that of Na(+)/citrate cotransporter (Slc13a5) from Rattus norvegicus (Rat).